Reading from the N-terminus, the 193-residue chain is Zinc finger protein AZF3 (193 aa).

2 consecutive C2H2-type zinc fingers follow at residues 75 to 97 (YKCG…KASH) and 118 to 140 (HVCS…KRCH).

Expressed in roots.

The protein localises to the nucleus. In terms of biological role, transcriptional repressor probably involved in abiotic stress responses. Binds DNA in a sequence-specific manner and can repress the transactivation activity of other transcription factors. The polypeptide is Zinc finger protein AZF3 (AZF3) (Arabidopsis thaliana (Mouse-ear cress)).